A 129-amino-acid polypeptide reads, in one-letter code: GEL complex subunit OPTI (129 aa).

The Cytoplasmic segment spans residues 1-44; it reads MSGGRRKEEPPQPQLANGALKVSVWSKVLRSDAAWEDKDEFLDV. The helical transmembrane segment at 45–65 threads the bilayer; sequence IYWFRQIIAVVLGVIWGVLPL. R66 is a topological domain (lumenal). A helical transmembrane segment spans residues 67–84; that stretch reads GFLGIAGFCVINAGVLYL. The Cytoplasmic portion of the chain corresponds to 85 to 103; the sequence is YFSNYLQIDEEEYGGTWEL. A helical transmembrane segment spans residues 104-127; sequence TKEGFMTSFALFMVIWIIFYTAIH. The Lumenal portion of the chain corresponds to 128 to 129; that stretch reads YD.

It belongs to the EMC6 family. Component of the GET- and EMC-like (GEL) complex, composed of RAB5IF/OPTI and TMCO1. The GEL complex is part of the multi-pass translocon (MPT) complex, composed of three subcomplexes, the GEL complex (composed of RAB5IF/OPTI and TMCO1), the BOS complex (composed of NCLN/Nicalin, NOMO1 and TMEM147) and the PAT complex (composed of WDR83OS/Asterix and CCDC47). The MPT complex associates with the SEC61 complex. Interacts with NDUFS3, NDUFA4, NDUFV1, NDUFA9 and NDUFS8 of the mitochondrial membrane respiratory chain NADH dehydrogenase (Complex I). Interacts with UQCRC2 of the ubiquinol-cytochrome c reductase complex (Complex III). Interacts with COX5A and COX7C of the cytochrome c oxidase complex (Complex IV).

Its subcellular location is the endoplasmic reticulum membrane. It is found in the mitochondrion inner membrane. Its function is as follows. Component of the multi-pass translocon (MPT) complex that mediates insertion of multi-pass membrane proteins into the lipid bilayer of membranes. The MPT complex takes over after the SEC61 complex: following membrane insertion of the first few transmembrane segments of proteins by the SEC61 complex, the MPT complex occludes the lateral gate of the SEC61 complex to promote insertion of subsequent transmembrane regions. Within the MPT complex, the GEL subcomplex may mediate insertion of transmembrane regions into the membrane. In addition to its role in multi-pass membrane insertion, RAB5IF/OPTI also acts as an assembly factor for mitochondrial respiratory complexes. This Canis lupus familiaris (Dog) protein is GEL complex subunit OPTI (RAB5IF).